The sequence spans 600 residues: Elongation factor 4 (600 aa).

One can recognise a tr-type G domain in the interval 7–189 (SLIRNFSIIA…ALVQRLPAPT (183 aa)). Residues 19-24 (DHGKST) and 136-139 (NKID) contribute to the GTP site.

This sequence belongs to the TRAFAC class translation factor GTPase superfamily. Classic translation factor GTPase family. LepA subfamily.

It is found in the cell inner membrane. The enzyme catalyses GTP + H2O = GDP + phosphate + H(+). Required for accurate and efficient protein synthesis under certain stress conditions. May act as a fidelity factor of the translation reaction, by catalyzing a one-codon backward translocation of tRNAs on improperly translocated ribosomes. Back-translocation proceeds from a post-translocation (POST) complex to a pre-translocation (PRE) complex, thus giving elongation factor G a second chance to translocate the tRNAs correctly. Binds to ribosomes in a GTP-dependent manner. The sequence is that of Elongation factor 4 from Gluconobacter oxydans (strain 621H) (Gluconobacter suboxydans).